Reading from the N-terminus, the 148-residue chain is uncharacterized protein (148 aa).

3 consecutive transmembrane segments (helical) span residues 25-45 (FCTV…LLTA), 85-105 (IVRF…LLYL), and 118-138 (LAAT…WVFG).

This sequence belongs to the GtrA family.

Its subcellular location is the cell membrane. This is an uncharacterized protein from Bacillus subtilis (strain 168).